The sequence spans 443 residues: ATP-dependent protease ATPase subunit HslU (443 aa).

ATP contacts are provided by residues I18, 60–65 (GVGKTE), D256, E321, and R393.

This sequence belongs to the ClpX chaperone family. HslU subfamily. As to quaternary structure, a double ring-shaped homohexamer of HslV is capped on each side by a ring-shaped HslU homohexamer. The assembly of the HslU/HslV complex is dependent on binding of ATP.

It is found in the cytoplasm. Its function is as follows. ATPase subunit of a proteasome-like degradation complex; this subunit has chaperone activity. The binding of ATP and its subsequent hydrolysis by HslU are essential for unfolding of protein substrates subsequently hydrolyzed by HslV. HslU recognizes the N-terminal part of its protein substrates and unfolds these before they are guided to HslV for hydrolysis. The sequence is that of ATP-dependent protease ATPase subunit HslU from Shigella dysenteriae serotype 1 (strain Sd197).